A 596-amino-acid chain; its full sequence is Protein NRT1/ PTR FAMILY 3.1 (596 aa).

Over residues 1 to 16 the composition is skewed to basic and acidic residues; that stretch reads MEEQSKNKISEEEKQL. Residues 1 to 23 form a disordered region; it reads MEEQSKNKISEEEKQLHGRPNRP. The next 12 helical transmembrane spans lie at 27-47, 73-93, 98-118, 137-157, 185-205, 213-233, 334-354, 372-392, 416-436, 453-473, 497-517, and 542-562; these read LITM…VVGF, FAGT…SFAG, ITFA…SAII, TAQL…SGGI, NWYY…LVWI, LGLG…VGGF, MGPI…QGTF, IPAG…IIFY, MGIG…VEVK, IVPI…VAEA, ALFW…VTLV, and YFYW…LWCA.

This sequence belongs to the major facilitator superfamily. Proton-dependent oligopeptide transporter (POT/PTR) (TC 2.A.17) family. Expressed in shoots, stems, leaves, flowers and siliques.

It is found in the membrane. Functionally, may act as an efflux-type nitrite transporter. Not regulated by the PII protein involved in the regulation of nitrite uptake into higher plant chloroplasts. In Arabidopsis thaliana (Mouse-ear cress), this protein is Protein NRT1/ PTR FAMILY 3.1 (NPF3.1).